Reading from the N-terminus, the 285-residue chain is Nucleotide-binding protein HI_1146 (285 aa).

8 to 15 (GRSGAGKS) contributes to the ATP binding site. Residue 56–59 (DIRN) participates in GTP binding.

It belongs to the RapZ-like family.

Its function is as follows. Displays ATPase and GTPase activities. This chain is Nucleotide-binding protein HI_1146, found in Haemophilus influenzae (strain ATCC 51907 / DSM 11121 / KW20 / Rd).